The primary structure comprises 378 residues: POU domain, class 3, transcription factor 2 (378 aa).

Disordered regions lie at residues 1–28 (MATTASNHYNILTSSPSIVHSEPGSMQQ), 86–118 (SPRDEMHNSSNLQHQSRPPHLVHQTHGNHHDSR), and 151–205 (LIPG…TPTS). Residues 164 to 181 (MRDAHEDHHSPHLSDHGH) are compositionally biased toward basic and acidic residues. The POU-specific domain maps to 200-274 (EDTPTSDDLE…LLNKWLEEAD (75 aa)). Ser-279 bears the Phosphoserine mark. A DNA-binding region (homeobox) is located at residues 292 to 351 (KRKKRTSIEVSVKGALESHFLKCPKPAASEITSLADSLQLEKEVVRVWFCNRRQKEKRMT). The tract at residues 347-378 (EKRMTPPGGPLPGTEDVYGDTPPHHGVQTPVQ) is disordered.

Belongs to the POU transcription factor family. Class-3 subfamily. Predominantly expressed in the central nervous system, with strong expression in the cerebellum.

The protein localises to the nucleus. In terms of biological role, transcription factor that may play important roles in patterning the embryonic brain. The sequence is that of POU domain, class 3, transcription factor 2 (pou3f2) from Danio rerio (Zebrafish).